A 123-amino-acid polypeptide reads, in one-letter code: Ribosome-binding factor A (123 aa).

The protein belongs to the RbfA family. Monomer. Binds 30S ribosomal subunits, but not 50S ribosomal subunits or 70S ribosomes.

The protein resides in the cytoplasm. Its function is as follows. One of several proteins that assist in the late maturation steps of the functional core of the 30S ribosomal subunit. Associates with free 30S ribosomal subunits (but not with 30S subunits that are part of 70S ribosomes or polysomes). Required for efficient processing of 16S rRNA. May interact with the 5'-terminal helix region of 16S rRNA. In Koribacter versatilis (strain Ellin345), this protein is Ribosome-binding factor A.